The following is a 164-amino-acid chain: Succinate dehydrogenase assembly factor 2, mitochondrial (164 aa).

This sequence belongs to the SDHAF2 family. In terms of assembly, interacts with the flavoprotein subunit within the SDH catalytic dimer.

The protein resides in the mitochondrion matrix. Plays an essential role in the assembly of succinate dehydrogenase (SDH), an enzyme complex (also referred to as respiratory complex II) that is a component of both the tricarboxylic acid (TCA) cycle and the mitochondrial electron transport chain, and which couples the oxidation of succinate to fumarate with the reduction of ubiquinone (coenzyme Q) to ubiquinol. Required for flavinylation (covalent attachment of FAD) of the flavoprotein subunit of the SDH catalytic dimer. The sequence is that of Succinate dehydrogenase assembly factor 2, mitochondrial from Lodderomyces elongisporus (strain ATCC 11503 / CBS 2605 / JCM 1781 / NBRC 1676 / NRRL YB-4239) (Yeast).